A 604-amino-acid chain; its full sequence is MARISFSYLCPASWYFTVPTVSPFLRQRVAFLGLFFISCLLLLMLIIDFRHWSASLPRDRQYERYLARVGELEATDTEDPNLNYGLVVDCGSSGSRIFVYFWPRHNGNPHDLLDIKQMRDRNSQPVVKKIKPGISAMADTPEHASDYLRPLLSFAAAHVPVKKHKETPLYILCTAGMRLLPERKQLAILADLVKDLPLEFDFLFSQSQAEVISGKQEGVYAWIGINFVLGRFDHEDESDAEATQELAAGRRRTVGILDMGGASLQIAYEVPTSTSVLPAKQEEAAKILLAEFNLGCDVQHTEHVYRVYVTTFLGFGGNFARQRYEDLVLNETLNKNRLLGQKTGLSPDNPFLDPCLPVGLTDVVERNSQVLHVRGRGDWVSCGAMLSPLLARSNTSQASLNGIYQSPIDFNNSEFYGFSEFFYCTEDVLRIGGRYHGPTFAKAAQDYCGMAWSVLTQRFKNGLFSSHADEHRLKYQCFKSAWMYQVLHEGFHFPYDYPNLRTAQLVYDREVQWTLGAILYKTRFLPLRDLRQEGVRQAHGSWFRLSFVYNHYLFFACILVVLLAIFLYLLRLRRIHHRQTRASAPLDLLWLEEVVPMMGVQVGP.

The Cytoplasmic portion of the chain corresponds to 1–28 (MARISFSYLCPASWYFTVPTVSPFLRQR). Residues 29–49 (VAFLGLFFISCLLLLMLIIDF) traverse the membrane as a helical segment. At 50-546 (RHWSASLPRD…QAHGSWFRLS (497 aa)) the chain is on the vesicular side. Glutamate 217 serves as the catalytic Proton acceptor. Asparagine 330 carries N-linked (GlcNAc...) asparagine glycosylation. Cysteine 448 and cysteine 477 are oxidised to a cystine. A helical membrane pass occupies residues 547-567 (FVYNHYLFFACILVVLLAIFL). Residues 568–604 (YLLRLRRIHHRQTRASAPLDLLWLEEVVPMMGVQVGP) are Cytoplasmic-facing.

The protein belongs to the GDA1/CD39 NTPase family. Ca(2+) is required as a cofactor. The cofactor is Mg(2+).

The protein resides in the cytoplasmic vesicle membrane. It catalyses the reaction a ribonucleoside 5'-triphosphate + H2O = a ribonucleoside 5'-diphosphate + phosphate + H(+). It carries out the reaction UTP + H2O = UDP + phosphate + H(+). The catalysed reaction is GTP + H2O = GDP + phosphate + H(+). The enzyme catalyses CTP + H2O = CDP + phosphate + H(+). Its function is as follows. Catalyzes the hydrolysis of nucleoside triphosphates and diphosphates in a calcium- or magnesium-dependent manner. Preferentially hydrolyzes nucleoside 5'-triphosphates, with substrate preference for UTP &gt; GTP &gt; CTP. Hydrolyzes ATP and nucleoside diphosphates only to a minor extent. In Homo sapiens (Human), this protein is Ectonucleoside triphosphate diphosphohydrolase 7 (ENTPD7).